The following is a 385-amino-acid chain: Leucine aminopeptidase 1 (385 aa).

An N-terminal signal peptide occupies residues 1–20 (MKLPSLLSLGVAASTTIVAA). Positions 21–87 (VPDQKPIGDT…FPKTFAQTTV (67 aa)) are excised as a propeptide. Asparagine 177 carries an N-linked (GlcNAc...) asparagine glycan. Positions 185, 204, 243, and 270 each coordinate Zn(2+). A disulfide bridge links cysteine 319 with cysteine 323. Histidine 352 lines the Zn(2+) pocket.

It belongs to the peptidase M28 family. M28E subfamily. As to quaternary structure, monomer. Requires Zn(2+) as cofactor.

Its subcellular location is the secreted. In terms of biological role, extracellular aminopeptidase that allows assimilation of proteinaceous substrates. This Ajellomyces capsulatus (strain NAm1 / WU24) (Darling's disease fungus) protein is Leucine aminopeptidase 1 (LAP1).